Consider the following 424-residue polypeptide: Adenylosuccinate synthetase (424 aa).

GTP is bound by residues 12–18 (GDEGKGK) and 40–42 (GHT). Asp13 functions as the Proton acceptor in the catalytic mechanism. Mg(2+) is bound by residues Asp13 and Gly40. Residues 13–16 (DEGK), 38–41 (NAGH), Thr130, Arg144, Asn220, Thr235, and Arg299 each bind IMP. His41 (proton donor) is an active-site residue. 295-301 (VTTGRKR) contributes to the substrate binding site. GTP-binding positions include Arg301, 327 to 329 (KLD), and 412 to 414 (GTG).

This sequence belongs to the adenylosuccinate synthetase family. Homodimer. Requires Mg(2+) as cofactor.

Its subcellular location is the cytoplasm. It carries out the reaction IMP + L-aspartate + GTP = N(6)-(1,2-dicarboxyethyl)-AMP + GDP + phosphate + 2 H(+). Its pathway is purine metabolism; AMP biosynthesis via de novo pathway; AMP from IMP: step 1/2. Its function is as follows. Plays an important role in the de novo pathway and in the salvage pathway of purine nucleotide biosynthesis. Catalyzes the first committed step in the biosynthesis of AMP from IMP. This chain is Adenylosuccinate synthetase (adB), found in Emericella nidulans (strain FGSC A4 / ATCC 38163 / CBS 112.46 / NRRL 194 / M139) (Aspergillus nidulans).